The primary structure comprises 940 residues: MASPPSSGQPRPPPPPPPPARLLLPLLLSLLLWLAPGAWGWTRGAPRPPPSSPPLSIMGLMPLTKEVAKGSIGRGVLPAVELAIEQIRNESLLRPYFLDLRLYDTECDNAKGLKAFYDAIKYGPNHLMVFGGVCPSVTSIIAESLQGWNLVQLSFAATTPVLADKKKYPYFFRTVPSDNAVNPAILKLLKHFRWRRVGTLTQDVQRFSEVRNDLTGVLYGEDIEISDTESFSNDPCTSVKKLKGNDVRIILGQFDQNMAAKVFCCAFEESMFGSKYQWIIPGWYEPAWWEQVHVEANSSRCLRRSLLAAMEGYIGVDFEPLSSKQIKTISGKTPQQFEREYNSKRSGVGPSKFHGYAYDGIWVIAKTLQRAMETLHASSRHQRIQDFNYTDHTLGKIILNAMNETNFFGVTGQVVFRNGERMGTIKFTQFQDSREVKVGEYNAVADTLEIINDTIRFQGSEPPKDKTIILEQLRKISLPLYSILSALTILGMIMASAFLFFNIKNRNQKLIKMSSPYMNNLIILGGMLSYASIFLFGLDGSFVSEKTFETLCTVRTWILTVGYTTAFGAMFAKTWRVHAIFKNVKMKKKIIKDQKLLVIVGGMLLIDLCILICWQAVDPLRRTVERYSMEPDPAGRDISIRPLLEHCENTHMTIWLGIVYAYKGLLMLFGCFLAWETRNVSIPALNDSKYIGMSVYNVGIMCIIGAAVSFLTRDQPNVQFCIVALVIIFCSTITLCLVFVPKLITLRTNPDAATQNRRFQFTQNQKKEDSKTSTSVTSVNQASTSRLEGLQSENHRLRMKITELDKDLEEVTMQLQDTPEKTTYIKQNHYQELNDILSLGNFTESTDGGKAILKNHLDQNPQLQWNTTEPSRTCKDPIEDINSPEHIQRRLSLQLPILHHAYLPSIGGVDASCVSPCVSPTASPRHRHVPPSFRVMVSGL.

An N-terminal signal peptide occupies residues 1 to 40 (MASPPSSGQPRPPPPPPPPARLLLPLLLSLLLWLAPGAWG). The Extracellular portion of the chain corresponds to 41–482 (WTRGAPRPPP…LRKISLPLYS (442 aa)). Residue Asn-89 is glycosylated (N-linked (GlcNAc...) asparagine). 3 disulfide bridges follow: Cys-107-Cys-134, Cys-236-Cys-265, and Cys-264-Cys-301. N-linked (GlcNAc...) asparagine glycosylation is found at Asn-297, Asn-388, Asn-403, and Asn-452. Residues 483–503 (ILSALTILGMIMASAFLFFNI) form a helical membrane-spanning segment. Topologically, residues 504-521 (KNRNQKLIKMSSPYMNNL) are cytoplasmic. Residues 522–542 (IILGGMLSYASIFLFGLDGSF) traverse the membrane as a helical segment. The Extracellular portion of the chain corresponds to 543–550 (VSEKTFET). A helical transmembrane segment spans residues 551 to 571 (LCTVRTWILTVGYTTAFGAMF). At 572-596 (AKTWRVHAIFKNVKMKKKIIKDQKL) the chain is on the cytoplasmic side. A helical transmembrane segment spans residues 597-617 (LVIVGGMLLIDLCILICWQAV). The Extracellular segment spans residues 618–653 (DPLRRTVERYSMEPDPAGRDISIRPLLEHCENTHMT). Residues 654 to 674 (IWLGIVYAYKGLLMLFGCFLA) traverse the membrane as a helical segment. Over 675 to 690 (WETRNVSIPALNDSKY) the chain is Cytoplasmic. Residues 691-711 (IGMSVYNVGIMCIIGAAVSFL) traverse the membrane as a helical segment. Topologically, residues 712-719 (TRDQPNVQ) are extracellular. The helical transmembrane segment at 720–740 (FCIVALVIIFCSTITLCLVFV) threads the bilayer. Residues 741–940 (PKLITLRTNP…PSFRVMVSGL (200 aa)) are Cytoplasmic-facing. The interval 762-789 (TQNQKKEDSKTSTSVTSVNQASTSRLEG) is disordered. Residues 772–786 (TSTSVTSVNQASTSR) are compositionally biased toward polar residues. 2 positions are modified to phosphoserine: Ser-775 and Ser-778. A coiled-coil region spans residues 780-818 (NQASTSRLEGLQSENHRLRMKITELDKDLEEVTMQLQDT). Phosphothreonine is present on Thr-818. A phosphoserine mark is found at Ser-883, Ser-892, Ser-912, Ser-915, Ser-919, and Ser-923.

The protein belongs to the G-protein coupled receptor 3 family. GABA-B receptor subfamily. Heterodimer of GABBR1 and GABBR2. Homodimers may form, but are inactive. Interacts (via C-terminus) with ATF4 (via leucine zipper domain). Interacts with KCTD8, KCTD12 and KCTD16; this interaction determines the pharmacology and kinetics of the receptor response, the KCTD proteins markedly accelerating the GABA-B response, although to different extents. In terms of tissue distribution, highly expressed in areas of the brain including thalamic nuclei, the hippocampus, cerebellar Purkinje cells and the medial habenula, and moderately expressed in the cerebral cortex, certain anterioventral thalamic nuclei, dorsal medial hypothalamic nucleus and suprachiasmatic nuclei. Also weakly expressed in the testis.

It is found in the cell membrane. Its subcellular location is the postsynaptic cell membrane. The protein resides in the perikaryon. It localises to the cell projection. The protein localises to the dendrite. Component of a heterodimeric G-protein coupled receptor for GABA, formed by GABBR1 and GABBR2. Within the heterodimeric GABA receptor, only GABBR1 seems to bind agonists, while GABBR2 mediates coupling to G proteins. Ligand binding causes a conformation change that triggers signaling via guanine nucleotide-binding proteins (G proteins) and modulates the activity of down-stream effectors, such as adenylate cyclase. Signaling inhibits adenylate cyclase, stimulates phospholipase A2, activates potassium channels, inactivates voltage-dependent calcium-channels and modulates inositol phospholipid hydrolysis. Plays a critical role in the fine-tuning of inhibitory synaptic transmission. Pre-synaptic GABA receptor inhibits neurotransmitter release by down-regulating high-voltage activated calcium channels, whereas postsynaptic GABA receptor decreases neuronal excitability by activating a prominent inwardly rectifying potassium (Kir) conductance that underlies the late inhibitory postsynaptic potentials. Not only implicated in synaptic inhibition but also in hippocampal long-term potentiation, slow wave sleep, muscle relaxation and antinociception. This chain is Gamma-aminobutyric acid type B receptor subunit 2 (Gabbr2), found in Rattus norvegicus (Rat).